We begin with the raw amino-acid sequence, 359 residues long: Peptide chain release factor 1 (359 aa).

An N5-methylglutamine modification is found at Q233.

It belongs to the prokaryotic/mitochondrial release factor family. Methylated by PrmC. Methylation increases the termination efficiency of RF1.

It is found in the cytoplasm. Its function is as follows. Peptide chain release factor 1 directs the termination of translation in response to the peptide chain termination codons UAG and UAA. The polypeptide is Peptide chain release factor 1 (Cytophaga hutchinsonii (strain ATCC 33406 / DSM 1761 / CIP 103989 / NBRC 15051 / NCIMB 9469 / D465)).